The following is a 344-amino-acid chain: Ribosomal RNA large subunit methyltransferase Cfr (344 aa).

Residue Glu-90 is the Proton acceptor of the active site. The Radical SAM core domain maps to Lys-97–Glu-330. Residues Cys-104 and Cys-335 are joined by a disulfide bond. [4Fe-4S] cluster is bound by residues Cys-111, Cys-115, and Cys-118. S-adenosyl-L-methionine is bound by residues Gly-157–Glu-158, Ser-188, Ser-211–His-213, and Asn-292. The active-site S-methylcysteine intermediate is Cys-335.

The protein belongs to the radical SAM superfamily. RlmN family. Cfr subfamily. [4Fe-4S] cluster serves as cofactor.

It is found in the cytoplasm. It catalyses the reaction adenosine(2503) in 23S rRNA + 2 reduced [2Fe-2S]-[ferredoxin] + 2 S-adenosyl-L-methionine = 8-methyladenosine(2503) in 23S rRNA + 5'-deoxyadenosine + L-methionine + 2 oxidized [2Fe-2S]-[ferredoxin] + S-adenosyl-L-homocysteine. In terms of biological role, specifically methylates position 8 of adenine 2503 in 23S rRNA. Confers resistance to some classes of antibiotics. This chain is Ribosomal RNA large subunit methyltransferase Cfr, found in Clostridium botulinum (strain Loch Maree / Type A3).